Consider the following 335-residue polypeptide: Tetraacyldisaccharide 4'-kinase (335 aa).

59 to 66 (TAGGNGKT) is a binding site for ATP.

The protein belongs to the LpxK family.

It catalyses the reaction a lipid A disaccharide + ATP = a lipid IVA + ADP + H(+). The protein operates within glycolipid biosynthesis; lipid IV(A) biosynthesis; lipid IV(A) from (3R)-3-hydroxytetradecanoyl-[acyl-carrier-protein] and UDP-N-acetyl-alpha-D-glucosamine: step 6/6. In terms of biological role, transfers the gamma-phosphate of ATP to the 4'-position of a tetraacyldisaccharide 1-phosphate intermediate (termed DS-1-P) to form tetraacyldisaccharide 1,4'-bis-phosphate (lipid IVA). The polypeptide is Tetraacyldisaccharide 4'-kinase (Vibrio campbellii (strain ATCC BAA-1116)).